The chain runs to 195 residues: Calcium channel flower (195 aa).

3 helical membrane passes run 34-54 (LLGI…VISI), 66-88 (IIQM…VCIE), and 117-137 (IFMC…ATGV).

It belongs to the calcium channel flower family. As to quaternary structure, homomultimer. Associates with the dally/ magu complex.

It localises to the cell membrane. The protein localises to the cytoplasmic vesicle. It is found in the secretory vesicle. The protein resides in the synaptic vesicle membrane. Its subcellular location is the presynaptic cell membrane. It localises to the endosome. Its activity is regulated as follows. Channel activity is inhibited by La(3+), which reduces Ca(2+) influx and thus inhibits it's function in promoting activity-dependent bulk endocytosis (ADBE) in response to high stimuli. In terms of biological role, transmembrane protein which mediates synaptic endocytosis, fitness-based cell culling, neuronal culling, morphogen gradient scaling, and calcium transport. Regulates synaptic endocytosis and hence couples exo- with endocytosis. Controls two major modes of synaptic vesicle (SV) endocytosis in the synaptic boutons of neuromuscular junctions (NMJs); Ca(2+) channel-independent Clathrin-mediated endocytosis (CME) in response to mild stimulation, and Ca(2+) channel-dependent activity-dependent bulk endocytosis (ADBE) in response to strong stimulation. Functions in ADBE and subsequent SV reformation from bulk endosomes by initiating Ca(2+) channel-dependent phosphatidylinositol 4,5-bisphosphate (PtdIns(4,5)P2) compartmentalization in synaptic boutons. There it acts at the periactive zone to provide the low Ca(2+) levels required to initiate Calcineurin activation and upregulate PtdIns(4,5)P2. Conversely PtdIns(4,5)P2 enhances fwe Ca(2+) channel-activity, establishing a positive feedback loop that induces PtdIns(4,5)P2 microdomain at the periactive zone. These microdomains trigger bulk membrane invagination (i.e. ADBE) by triggering actin polymerization while also promoting localization of fwe to bulk endosomes, thereby removing the ADBE trigger to reduce endocytosis and prevent excess membrane uptake. PtdIns(4,5)P2 then promotes SV reformation from the bulk endosomes, to coordinate ADBE and subsequent SV reformation. Different combinations of the flower isoforms at the cell membrane are also required for the identification and elimination of suboptimal or supernumerary cells during development, regeneration, and adulthood. Required for the recognition and elimination of unfit cells in the developing wing during cell competition. In the developing pupal retina, mediates the elimination of unwanted postmitotic neurons, including supernumerary photoreceptor neurons that form at the periphery of the retina and are contained within incomplete ommatidia units. Also required for efficient elimination and replacement of old neurons by newly generated neurons during regeneration in the adult brain following mechanical injury. Downstream of the flower fitness fingerprints, cells identified as unwanted or unfit are eliminated via apoptosis through the expression of ahuizotl (azot). However, the cells marked for elimination by the flower isoforms only undergo apoptosis if additional thresholds are met; (1) their neighboring fit/healthy cells express different levels of the fwe isoforms, and (2) the levels of the protective signal SPARC expressed by the loser or unwanted cells are unable to inhibit caspase activation. These additional thresholds for flower-mediated apoptosis, allows useful cells to recover from transient and limited stress before they are unnecessarily eliminated. Functions with dally and magu in a mechanism of scaling, which utilises apoptosis to ensure that the dpp morphogen gradient, which mediates organ growth, remains proportional to the size of the growing wing. In this mechanism, fwe represses dally- and Magu-dependent activity in expanding the gradient, and dally/Magu inhibits fwe-dependent apoptosis to keep cell death rate low. When the levels of these different proteins are optimally regulated the gradient correctly scales with organ growth but when this fails, fwe-mediated apoptosis is activated to trim the developing tissue to match the correct size of the gradient. The protein is Calcium channel flower of Drosophila ananassae (Fruit fly).